The chain runs to 198 residues: Holliday junction branch migration complex subunit RuvA (198 aa).

The domain I stretch occupies residues 1 to 63 (MYDYIKGQLT…EDAQLLFGFH (63 aa)). Residues 64–142 (SEEEKDVFLK…EAPKEESSKP (79 aa)) are domain II. The interval 143 to 147 (PKAKQ) is flexible linker. The interval 148–198 (QGNEQLDEAVEALLALGYKATELKKIRAFFEGTSETAEQYIKSALKMLMKG) is domain III.

It belongs to the RuvA family. In terms of assembly, homotetramer. Forms an RuvA(8)-RuvB(12)-Holliday junction (HJ) complex. HJ DNA is sandwiched between 2 RuvA tetramers; dsDNA enters through RuvA and exits via RuvB. An RuvB hexamer assembles on each DNA strand where it exits the tetramer. Each RuvB hexamer is contacted by two RuvA subunits (via domain III) on 2 adjacent RuvB subunits; this complex drives branch migration. In the full resolvosome a probable DNA-RuvA(4)-RuvB(12)-RuvC(2) complex forms which resolves the HJ.

The protein resides in the cytoplasm. The RuvA-RuvB-RuvC complex processes Holliday junction (HJ) DNA during genetic recombination and DNA repair, while the RuvA-RuvB complex plays an important role in the rescue of blocked DNA replication forks via replication fork reversal (RFR). RuvA specifically binds to HJ cruciform DNA, conferring on it an open structure. The RuvB hexamer acts as an ATP-dependent pump, pulling dsDNA into and through the RuvAB complex. HJ branch migration allows RuvC to scan DNA until it finds its consensus sequence, where it cleaves and resolves the cruciform DNA. The sequence is that of Holliday junction branch migration complex subunit RuvA from Streptococcus equi subsp. equi (strain 4047).